We begin with the raw amino-acid sequence, 372 residues long: DSC E3 ubiquitin ligase complex subunit 2 (372 aa).

5 helical membrane passes run 26–46, 54–74, 95–115, 126–146, and 160–180; these read VVAG…LHLL, ILLW…LFII, YMFI…SLLF, TFLI…TVFV, and VIPM…NAFL. The segment at 246-314 is disordered; that stretch reads TENENQVENP…LPTGPASQLY (69 aa). Residues 249–268 show a composition bias toward polar residues; sequence ENQVENPVSNADANDSPTRQ. Residue serine 264 is modified to Phosphoserine. Threonine 266 carries the post-translational modification Phosphothreonine. Residues 269 to 284 are compositionally biased toward low complexity; the sequence is NARATAIASSSNTAAS. Over residues 286-305 the composition is skewed to polar residues; sequence RNRQQISHPPLGRTSSSSVL. Residues 332-368 form the UBA domain; that stretch reads EDINTVQTIMQTSRAQAIQALSQTNDVQRAVELLLEQ.

Component of the DSC E3 ubiquitin ligase complex composed of dsc1, dsc2, dsc3 and dsc4.

It is found in the golgi apparatus membrane. It carries out the reaction S-ubiquitinyl-[E2 ubiquitin-conjugating enzyme]-L-cysteine + [acceptor protein]-L-lysine = [E2 ubiquitin-conjugating enzyme]-L-cysteine + N(6)-ubiquitinyl-[acceptor protein]-L-lysine.. It participates in protein modification; protein ubiquitination. Component of the DSC E3 ubiquitin ligase complex which is required for the sre1 transcriptional activator proteolytic cleavage to release the soluble transcription factor from the membrane in low oxygen or sterol conditions. The complex also plays an important role in the multivesicular body (MVB) pathway and functions in a post-endoplasmic reticulum pathway for protein degradation. The sequence is that of DSC E3 ubiquitin ligase complex subunit 2 (dsc2) from Schizosaccharomyces pombe (strain 972 / ATCC 24843) (Fission yeast).